The chain runs to 484 residues: Ureidoglycolate hydrolase (484 aa).

An N-terminal signal peptide occupies residues 1-28 (MATSAAARFLAALAGAAVLLVLLGGAAG). Positions 148, 159, 194, and 262 each coordinate Mn(2+). 2 substrate regions span residues 193–194 (EE) and 262–265 (HIEQ). Residues 284-399 (APASIKVEFE…LSEFKIINQD (116 aa)) are involved in dimerization. Residues His-298, Asn-348, and Arg-361 each contribute to the substrate site. A substrate region spans residues 431–432 (YH). His-456 lines the Mn(2+) pocket. Substrate is bound at residue His-456.

It belongs to the peptidase M20 family. As to quaternary structure, homodimer. Mn(2+) is required as a cofactor. The cofactor is Ni(2+). Co(2+) serves as cofactor.

It localises to the endoplasmic reticulum. The enzyme catalyses (S)-ureidoglycolate + H2O + 2 H(+) = glyoxylate + 2 NH4(+) + CO2. It functions in the pathway nitrogen metabolism; (S)-allantoin degradation; glyoxylate from (S)-ureidoglycolate: step 1/1. Its function is as follows. Involved in the catabolism of purine nucleotides. The sequential activity of AAH, UGLYAH and UAH allows a complete purine breakdown without the intermediate generation of urea. The protein is Ureidoglycolate hydrolase of Oryza sativa subsp. japonica (Rice).